Reading from the N-terminus, the 347-residue chain is Sensor protein VraS (347 aa).

2 helical membrane-spanning segments follow: residues 13 to 33 (ILVYSMLAAFLFIDKVFVNII) and 43 to 63 (IFGIPVFLFLNLIIILLCIIV). The Histidine kinase domain occupies 150–341 (RLARELHDSV…RIEVKAPLNK (192 aa)). Histidine 156 is modified (phosphohistidine).

Post-translationally, autophosphorylated on His-156.

It is found in the cell membrane. The enzyme catalyses ATP + protein L-histidine = ADP + protein N-phospho-L-histidine.. Member of the two-component regulatory system PprA/PprB involved in biofilm formation by controlling the expression of many related genes including type IVb pili major subunit flp pilin, adhesin bapA or cupE fimbriae. Also modulates quorum-sensing signal production acting on both negative and positive modulators. Functions as a heme sensor histidine kinase which is autophosphorylated at a histidine residue and transfers its phosphate group to PprB. This is Sensor protein VraS (vraS) from Staphylococcus aureus (strain COL).